The chain runs to 125 residues: Holo-[acyl-carrier-protein] synthase (125 aa).

The Mg(2+) site is built by aspartate 8 and glutamate 57.

This sequence belongs to the P-Pant transferase superfamily. AcpS family. Mg(2+) serves as cofactor.

It is found in the cytoplasm. The catalysed reaction is apo-[ACP] + CoA = holo-[ACP] + adenosine 3',5'-bisphosphate + H(+). Transfers the 4'-phosphopantetheine moiety from coenzyme A to a Ser of acyl-carrier-protein. This is Holo-[acyl-carrier-protein] synthase from Natranaerobius thermophilus (strain ATCC BAA-1301 / DSM 18059 / JW/NM-WN-LF).